The primary structure comprises 132 residues: Protein NrdI (132 aa).

The protein belongs to the NrdI family.

Its function is as follows. Probably involved in ribonucleotide reductase function. In Bartonella henselae (strain ATCC 49882 / DSM 28221 / CCUG 30454 / Houston 1) (Rochalimaea henselae), this protein is Protein NrdI.